The sequence spans 347 residues: Endophilin-A3 (347 aa).

The interval 1–21 (MSVAGLKKQFHKASQLFSEKI) is membrane-binding amphipathic helix. The BAR domain occupies 18-249 (SEKISGAEGT…LQMRISAASS (232 aa)). The interval 60 to 87 (PNPAYRAKLGMLNTVSKIRGQVKTTGYP) is required for dimerization upon membrane association. Residues 181-201 (EEVRQAVEKFEESKELAERSM) are a coiled coil. Residues 218–254 (FIEAALDYHRQSTEILQELQSKLQMRISAASSVPRRE) form an interaction with ARC region. Residues 248–271 (SSVPRREYKPRPVKRSSSELNGVS) form a disordered region. Serine 265 is subject to Phosphoserine. Residues 285-344 (MDQPCCRGLYDFEPENQGELGFKEGDIITLTNQIDENWYEGMIHGESGFFPINYVEVIVP) enclose the SH3 domain.

This sequence belongs to the endophilin family. As to quaternary structure, interacts with ARC. Interacts with DNM1, SGIP1 and SYNJ1. Interacts with the huntingtin exon 1 protein (HDEX1P) containing a glutamine repeat in the pathological range and promotes formation of insoluble polyglutamine-containing aggregates in vivo. Interacts with DYDC1. Interacts with FASLG. Interacts with ATXN2. Interacts with BIN2. As to expression, brain and testis.

The protein localises to the cytoplasm. Its subcellular location is the early endosome membrane. Implicated in endocytosis. May recruit other proteins to membranes with high curvature. The polypeptide is Endophilin-A3 (SH3GL3) (Homo sapiens (Human)).